The primary structure comprises 906 residues: Protein translocase subunit SecA (906 aa).

ATP-binding positions include Q87, 105-109, and D513; that span reads GEGKT. The segment at 860-906 is disordered; sequence QVNKGEVVSDENTGDDTFVRNEKKVGRNEPCPCGSGKKYKQCHGKLD. Basic and acidic residues predominate over residues 876-886; that stretch reads TFVRNEKKVGR. Residues C890, C892, C901, and H902 each coordinate Zn(2+). Basic residues predominate over residues 896–906; sequence KKYKQCHGKLD.

Belongs to the SecA family. As to quaternary structure, monomer and homodimer. Part of the essential Sec protein translocation apparatus which comprises SecA, SecYEG and auxiliary proteins SecDF-YajC and YidC. Requires Zn(2+) as cofactor.

It localises to the cell inner membrane. Its subcellular location is the cytoplasm. The catalysed reaction is ATP + H2O + cellular proteinSide 1 = ADP + phosphate + cellular proteinSide 2.. In terms of biological role, part of the Sec protein translocase complex. Interacts with the SecYEG preprotein conducting channel. Has a central role in coupling the hydrolysis of ATP to the transfer of proteins into and across the cell membrane, serving both as a receptor for the preprotein-SecB complex and as an ATP-driven molecular motor driving the stepwise translocation of polypeptide chains across the membrane. The chain is Protein translocase subunit SecA from Psychromonas ingrahamii (strain DSM 17664 / CCUG 51855 / 37).